We begin with the raw amino-acid sequence, 206 residues long: Large ribosomal subunit protein uL3 (206 aa).

It belongs to the universal ribosomal protein uL3 family. As to quaternary structure, part of the 50S ribosomal subunit. Forms a cluster with proteins L14 and L19.

One of the primary rRNA binding proteins, it binds directly near the 3'-end of the 23S rRNA, where it nucleates assembly of the 50S subunit. This Thermus thermophilus (strain ATCC BAA-163 / DSM 7039 / HB27) protein is Large ribosomal subunit protein uL3.